The chain runs to 180 residues: Cytidylate kinase (180 aa).

7-15 contributes to the ATP binding site; it reads GLPGSGTST.

It belongs to the cytidylate kinase family. Type 2 subfamily.

It localises to the cytoplasm. The catalysed reaction is CMP + ATP = CDP + ADP. It carries out the reaction dCMP + ATP = dCDP + ADP. The polypeptide is Cytidylate kinase (cmk) (Methanosarcina mazei (strain ATCC BAA-159 / DSM 3647 / Goe1 / Go1 / JCM 11833 / OCM 88) (Methanosarcina frisia)).